The primary structure comprises 35 residues: Kappa-theraphotoxin-Tb1a (35 aa).

3 cysteine pairs are disulfide-bonded: Cys-3/Cys-18, Cys-10/Cys-23, and Cys-17/Cys-30.

This sequence belongs to the neurotoxin 10 (Hwtx-1) family. 59 (Tltx) subfamily. In terms of assembly, monomer. In terms of tissue distribution, expressed by the venom gland.

It localises to the secreted. Blocks Kv4.2/KCND2 voltage-gated potassium channels (IC(50) is 193.0 nM) by shifting the voltage-dependence of channel activation to more depolarized potentials. The toxin is thought to bind to the S3-S4 linker region of the voltage sensor domain. This is Kappa-theraphotoxin-Tb1a from Theraphosa blondi (Goliath birdeating spider).